Here is a 558-residue protein sequence, read N- to C-terminus: Transcription termination factor MTEF18, mitochondrial (558 aa).

Residues 1–58 constitute a mitochondrion transit peptide; that stretch reads MFMVRLKFASISHNFSTVAAKHRRVPSKYKSLAIGKAQQAITDYLHTTRSLSYTHAEQ.

Belongs to the mTERF family.

Its subcellular location is the mitochondrion. Functionally, transcription termination factor involved in the regulation of mitochondrial-encoded gene expression. Essential for normal plant growth and development. This Arabidopsis thaliana (Mouse-ear cress) protein is Transcription termination factor MTEF18, mitochondrial.